We begin with the raw amino-acid sequence, 179 residues long: uncharacterized protein (179 aa).

This is an uncharacterized protein from Rickettsia conorii (strain ATCC VR-613 / Malish 7).